The following is a 319-amino-acid chain: Malate dehydrogenase (319 aa).

NAD(+) contacts are provided by residues 10 to 15 (GAGNIG) and Asp-34. 2 residues coordinate substrate: Arg-83 and Arg-89. NAD(+) contacts are provided by residues Asn-96 and 119–121 (ITN). Substrate contacts are provided by Asn-121 and Arg-152. The Proton acceptor role is filled by His-176.

It belongs to the LDH/MDH superfamily. MDH type 3 family.

The enzyme catalyses (S)-malate + NAD(+) = oxaloacetate + NADH + H(+). In terms of biological role, catalyzes the reversible oxidation of malate to oxaloacetate. This chain is Malate dehydrogenase, found in Francisella tularensis subsp. holarctica (strain FTNF002-00 / FTA).